A 78-amino-acid chain; its full sequence is Large ribosomal subunit protein bL28 (78 aa).

The interval 1 to 23 is disordered; sequence MSRVCQVTGKKPMVGNNRSHAKN.

The protein belongs to the bacterial ribosomal protein bL28 family.

The protein is Large ribosomal subunit protein bL28 of Shewanella frigidimarina (strain NCIMB 400).